The sequence spans 709 residues: Polyribonucleotide nucleotidyltransferase (709 aa).

Mg(2+)-binding residues include D485 and D491. The 60-residue stretch at 552 to 611 (PRIYTMKIDPKKIKDVIGKGGATIRSLTEETGTSIDIDDDGTVKIAAVDSNAAKNVMGRI) folds into the KH domain. Residues 621 to 689 (GAIYKGKVTR…RQGRIRLTMK (69 aa)) enclose the S1 motif domain.

This sequence belongs to the polyribonucleotide nucleotidyltransferase family. Component of the RNA degradosome, which is a multiprotein complex involved in RNA processing and mRNA degradation. The cofactor is Mg(2+).

It localises to the cytoplasm. The catalysed reaction is RNA(n+1) + phosphate = RNA(n) + a ribonucleoside 5'-diphosphate. Its function is as follows. Involved in mRNA degradation. Catalyzes the phosphorolysis of single-stranded polyribonucleotides processively in the 3'- to 5'-direction. This is Polyribonucleotide nucleotidyltransferase from Haemophilus influenzae (strain PittGG).